The sequence spans 349 residues: GDSL esterase/lipase At1g58725 (349 aa).

Positions 1–19 (MKIQILLFALVLIFVEANA) are cleaved as a signal peptide. An N-linked (GlcNAc...) asparagine glycan is attached at Asn25. Catalysis depends on Ser37, which acts as the Nucleophile. Asn316 is a glycosylation site (N-linked (GlcNAc...) asparagine). Catalysis depends on residues Asp324 and His327.

The protein belongs to the 'GDSL' lipolytic enzyme family.

It is found in the secreted. The polypeptide is GDSL esterase/lipase At1g58725 (Arabidopsis thaliana (Mouse-ear cress)).